We begin with the raw amino-acid sequence, 926 residues long: Sperm-associated antigen 1 (926 aa).

3 TPR repeats span residues 209 to 242 (ATRE…LPTV), 244 to 275 (AYNN…EPGN), and 276 to 309 (VKAL…EPDN). The interval 318–452 (EVERDLKNSE…ENPAGLKSQG (135 aa)) is disordered. Phosphoserine is present on residues serine 347 and serine 354. Over residues 352-368 (GKSGRKHEDGGGDKKPA) the composition is skewed to basic and acidic residues. A compositionally biased stretch (low complexity) spans 369-379 (EPAGAARAAQP). Serine 423 is modified (phosphoserine). Residues 428 to 441 (AGGGATGHPGGGQG) show a composition bias toward gly residues. 6 TPR repeats span residues 445–478 (PAGL…LEPA), 487–520 (SILY…HPFS), 522–554 (KPLL…DCGL), 623–656 (FKAL…NNKE), 657–690 (CAIY…ADGN), and 692–724 (KAFY…DPSI). 2 stretches are compositionally biased toward basic and acidic residues: residues 758–769 (IQEVNEGKEEPG) and 784–799 (KGGK…EKLP). The segment at 758–801 (IQEVNEGKEEPGRPAGEVSMGCLASEKGGKSSRSPEDPEKLPIA) is disordered. Residue 781-788 (ASEKGGKS) participates in GTP binding. Serine 791 is subject to Phosphoserine.

In terms of tissue distribution, present in most tissues, including lung, with the strongest expression in brain, colon, kidney, and testis. In sperm and testis, detected in particular in pachytene primary spermatocytes. Up-regulated in pancreatic tumor tissues and not in normal pancreatic tissue.

The protein resides in the cytoplasm. The protein localises to the dynein axonemal particle. In terms of biological role, may play a role in the cytoplasmic assembly of the ciliary dynein arms. May play a role in fertilization. Binds GTP and has GTPase activity. This Homo sapiens (Human) protein is Sperm-associated antigen 1 (SPAG1).